The primary structure comprises 366 residues: 3-isopropylmalate dehydrogenase (366 aa).

An NAD(+)-binding site is contributed by 76-89 (GPKWDHNPASLRPE). Substrate-binding residues include R96, R106, R134, and D222. Mg(2+)-binding residues include D222, D246, and D250. 280-292 (GSAPDIAGQGKAN) serves as a coordination point for NAD(+).

Belongs to the isocitrate and isopropylmalate dehydrogenases family. LeuB type 1 subfamily. As to quaternary structure, homodimer. Requires Mg(2+) as cofactor. Mn(2+) is required as a cofactor.

It localises to the cytoplasm. It catalyses the reaction (2R,3S)-3-isopropylmalate + NAD(+) = 4-methyl-2-oxopentanoate + CO2 + NADH. The protein operates within amino-acid biosynthesis; L-leucine biosynthesis; L-leucine from 3-methyl-2-oxobutanoate: step 3/4. Catalyzes the oxidation of 3-carboxy-2-hydroxy-4-methylpentanoate (3-isopropylmalate) to 3-carboxy-4-methyl-2-oxopentanoate. The product decarboxylates to 4-methyl-2 oxopentanoate. This chain is 3-isopropylmalate dehydrogenase (leuB), found in Heyndrickxia coagulans (Weizmannia coagulans).